The primary structure comprises 476 residues: Aspartyl/glutamyl-tRNA(Asn/Gln) amidotransferase subunit B (476 aa).

The protein belongs to the GatB/GatE family. GatB subfamily. Heterotrimer of A, B and C subunits.

It catalyses the reaction L-glutamyl-tRNA(Gln) + L-glutamine + ATP + H2O = L-glutaminyl-tRNA(Gln) + L-glutamate + ADP + phosphate + H(+). It carries out the reaction L-aspartyl-tRNA(Asn) + L-glutamine + ATP + H2O = L-asparaginyl-tRNA(Asn) + L-glutamate + ADP + phosphate + 2 H(+). Its function is as follows. Allows the formation of correctly charged Asn-tRNA(Asn) or Gln-tRNA(Gln) through the transamidation of misacylated Asp-tRNA(Asn) or Glu-tRNA(Gln) in organisms which lack either or both of asparaginyl-tRNA or glutaminyl-tRNA synthetases. The reaction takes place in the presence of glutamine and ATP through an activated phospho-Asp-tRNA(Asn) or phospho-Glu-tRNA(Gln). In Neisseria meningitidis serogroup B (strain ATCC BAA-335 / MC58), this protein is Aspartyl/glutamyl-tRNA(Asn/Gln) amidotransferase subunit B.